Reading from the N-terminus, the 179-residue chain is Ubiquitin-conjugating enzyme E2 C (179 aa).

Polar residues predominate over residues M1–T14. The disordered stretch occupies residues M1–V31. Position 2 is an N-acetylalanine (A2). At S3 the chain carries Phosphoserine. In terms of domain architecture, UBC core spans P30 to T175. C114 acts as the Glycyl thioester intermediate in catalysis.

This sequence belongs to the ubiquitin-conjugating enzyme family. As to quaternary structure, component of the APC/C complex, composed of at least 14 distinct subunits that assemble into a complex of at least 19 chains with a combined molecular mass of around 1.2 MDa. Within this complex, directly interacts with ANAPC2. Post-translationally, autoubiquitinated by the APC/C complex, leading to its degradation by the proteasome. Its degradation plays a central role in APC/C regulation, allowing cyclin-A accumulation before S phase entry. APC/C substrates inhibit the autoubiquitination of UBE2C/UBCH10 but not its E2 function, hence APC/C remaining active until its substrates have been destroyed.

The enzyme catalyses S-ubiquitinyl-[E1 ubiquitin-activating enzyme]-L-cysteine + [E2 ubiquitin-conjugating enzyme]-L-cysteine = [E1 ubiquitin-activating enzyme]-L-cysteine + S-ubiquitinyl-[E2 ubiquitin-conjugating enzyme]-L-cysteine.. The catalysed reaction is S-ubiquitinyl-[E1 ubiquitin-activating enzyme]-L-cysteine + [acceptor protein]-L-lysine = [E1 ubiquitin-activating enzyme]-L-cysteine + N(6)-monoubiquitinyl-[acceptor protein]-L-lysine.. It participates in protein modification; protein ubiquitination. Accepts ubiquitin from the E1 complex and catalyzes its covalent attachment to other proteins. In vitro catalyzes 'Lys-11'- and 'Lys-48'-linked polyubiquitination. Acts as an essential factor of the anaphase promoting complex/cyclosome (APC/C), a cell cycle-regulated ubiquitin ligase that controls progression through mitosis. Acts by initiating 'Lys-11'-linked polyubiquitin chains on APC/C substrates, leading to the degradation of APC/C substrates by the proteasome and promoting mitotic exit. This is Ubiquitin-conjugating enzyme E2 C (UBE2C) from Macaca fascicularis (Crab-eating macaque).